The sequence spans 255 residues: uncharacterized protein (255 aa).

A disordered region spans residues 42-67 (ACSGSPPEPGKGRPDTTPEQEVPVTA).

This is an uncharacterized protein from Mycobacterium tuberculosis (strain CDC 1551 / Oshkosh).